The following is a 495-amino-acid chain: Probable leucine aminopeptidase 2 (495 aa).

The N-terminal stretch at 1-21 is a signal peptide; sequence MKSQLLSLAVAVTTISQGVVG. The PA domain maps to 130 to 216; the sequence is MAELVVAKNN…SQEDGKNLAT (87 aa). N142 and N235 each carry an N-linked (GlcNAc...) asparagine glycan. Zn(2+) is bound by residues H259 and D271. A glycan (N-linked (GlcNAc...) asparagine) is linked at N272. E303 acts as the Proton acceptor in catalysis. Zn(2+) is bound by residues E304 and D332. N-linked (GlcNAc...) asparagine glycosylation occurs at N352. Zn(2+) is bound at residue H430.

Belongs to the peptidase M28 family. M28A subfamily. Monomer. Zn(2+) is required as a cofactor.

It localises to the secreted. Its function is as follows. Extracellular aminopeptidase that releases a wide variety of amino acids from natural peptides and contributes to pathogenicity. In Arthroderma benhamiae (strain ATCC MYA-4681 / CBS 112371) (Trichophyton mentagrophytes), this protein is Probable leucine aminopeptidase 2 (LAP2).